A 652-amino-acid chain; its full sequence is Ethylmalonyl-CoA mutase (652 aa).

A B12-binding domain is found at 519-647 (PLKFVVGKPG…MDIVGLVDRT (129 aa)). Residue His-532 coordinates adenosylcob(III)alamin.

This sequence belongs to the methylmalonyl-CoA mutase family. Homodimer. Adenosylcob(III)alamin is required as a cofactor.

The enzyme catalyses (2R)-ethylmalonyl-CoA = (2S)-methylsuccinyl-CoA. Radical enzyme that catalyzes the transformation of (2R)-ethylmalonyl-CoA to (2S)-methylsuccinyl-CoA. Is involved in the ethylmalonyl-CoA pathway for acetyl-CoA assimilation required for R.sphaeroides growth on acetate as sole carbon source. Is highly specific for its substrate, ethylmalonyl-CoA, and accepts methylmalonyl-CoA only at 0.2% relative activity. This chain is Ethylmalonyl-CoA mutase, found in Cereibacter sphaeroides (strain ATCC 17023 / DSM 158 / JCM 6121 / CCUG 31486 / LMG 2827 / NBRC 12203 / NCIMB 8253 / ATH 2.4.1.) (Rhodobacter sphaeroides).